Reading from the N-terminus, the 256-residue chain is Small ribosomal subunit protein eS1 (256 aa).

Residue A2 is modified to N-acetylalanine; partial.

This sequence belongs to the eukaryotic ribosomal protein eS1 family. Component of the small ribosomal subunit. Mature ribosomes consist of a small (40S) and a large (60S) subunit. The 40S subunit contains about 33 different proteins and 1 molecule of RNA (18S). The 60S subunit contains about 49 different proteins and 3 molecules of RNA (25S, 5.8S and 5S).

It is found in the cytoplasm. This chain is Small ribosomal subunit protein eS1, found in Candida albicans (strain SC5314 / ATCC MYA-2876) (Yeast).